We begin with the raw amino-acid sequence, 860 residues long: Alanine--tRNA ligase (860 aa).

Zn(2+)-binding residues include His-563, His-567, Cys-665, and His-669.

This sequence belongs to the class-II aminoacyl-tRNA synthetase family. Zn(2+) serves as cofactor.

The protein resides in the cytoplasm. The enzyme catalyses tRNA(Ala) + L-alanine + ATP = L-alanyl-tRNA(Ala) + AMP + diphosphate. Its function is as follows. Catalyzes the attachment of alanine to tRNA(Ala) in a two-step reaction: alanine is first activated by ATP to form Ala-AMP and then transferred to the acceptor end of tRNA(Ala). Also edits incorrectly charged Ser-tRNA(Ala) and Gly-tRNA(Ala) via its editing domain. The protein is Alanine--tRNA ligase of Vibrio cholerae serotype O1 (strain ATCC 39315 / El Tor Inaba N16961).